Here is a 419-residue protein sequence, read N- to C-terminus: Glucose-1-phosphate adenylyltransferase (419 aa).

Alpha-D-glucose 1-phosphate is bound by residues Tyr106, Gly171, 186 to 187 (EK), and Ser204.

Belongs to the bacterial/plant glucose-1-phosphate adenylyltransferase family. In terms of assembly, homotetramer.

It catalyses the reaction alpha-D-glucose 1-phosphate + ATP + H(+) = ADP-alpha-D-glucose + diphosphate. Its pathway is glycan biosynthesis; glycogen biosynthesis. Its function is as follows. Involved in the biosynthesis of ADP-glucose, a building block required for the elongation reactions to produce glycogen. Catalyzes the reaction between ATP and alpha-D-glucose 1-phosphate (G1P) to produce pyrophosphate and ADP-Glc. This Roseobacter denitrificans (strain ATCC 33942 / OCh 114) (Erythrobacter sp. (strain OCh 114)) protein is Glucose-1-phosphate adenylyltransferase.